The chain runs to 328 residues: Ketol-acid reductoisomerase (NADP(+)) (328 aa).

In terms of domain architecture, KARI N-terminal Rossmann spans 1–181 (MKIYYENDID…GLARAGVLET (181 aa)). Residues 24–27 (YGSQ), Arg-47, Ser-52, and 82–85 (DEIQ) contribute to the NADP(+) site. His-107 is a catalytic residue. An NADP(+)-binding site is contributed by Gly-133. In terms of domain architecture, KARI C-terminal knotted spans 182-327 (TFREETETDL…SKLRKLCGLE (146 aa)). 4 residues coordinate Mg(2+): Asp-190, Glu-194, Glu-226, and Glu-230. Ser-251 serves as a coordination point for substrate.

Belongs to the ketol-acid reductoisomerase family. Requires Mg(2+) as cofactor.

It carries out the reaction (2R)-2,3-dihydroxy-3-methylbutanoate + NADP(+) = (2S)-2-acetolactate + NADPH + H(+). The catalysed reaction is (2R,3R)-2,3-dihydroxy-3-methylpentanoate + NADP(+) = (S)-2-ethyl-2-hydroxy-3-oxobutanoate + NADPH + H(+). The protein operates within amino-acid biosynthesis; L-isoleucine biosynthesis; L-isoleucine from 2-oxobutanoate: step 2/4. It functions in the pathway amino-acid biosynthesis; L-valine biosynthesis; L-valine from pyruvate: step 2/4. Functionally, involved in the biosynthesis of branched-chain amino acids (BCAA). Catalyzes an alkyl-migration followed by a ketol-acid reduction of (S)-2-acetolactate (S2AL) to yield (R)-2,3-dihydroxy-isovalerate. In the isomerase reaction, S2AL is rearranged via a Mg-dependent methyl migration to produce 3-hydroxy-3-methyl-2-ketobutyrate (HMKB). In the reductase reaction, this 2-ketoacid undergoes a metal-dependent reduction by NADPH to yield (R)-2,3-dihydroxy-isovalerate. The protein is Ketol-acid reductoisomerase (NADP(+)) of Methanothermobacter thermautotrophicus (strain ATCC 29096 / DSM 1053 / JCM 10044 / NBRC 100330 / Delta H) (Methanobacterium thermoautotrophicum).